A 399-amino-acid polypeptide reads, in one-letter code: Phosphoglycerate kinase (399 aa).

Substrate contacts are provided by residues 22–24 (DFN), Arg38, 61–64 (HLGR), Arg120, and Arg153. ATP contacts are provided by residues Lys204, Glu326, and 352–355 (GGDT).

It belongs to the phosphoglycerate kinase family. In terms of assembly, monomer.

It localises to the cytoplasm. It catalyses the reaction (2R)-3-phosphoglycerate + ATP = (2R)-3-phospho-glyceroyl phosphate + ADP. Its pathway is carbohydrate degradation; glycolysis; pyruvate from D-glyceraldehyde 3-phosphate: step 2/5. This Geobacter sp. (strain M21) protein is Phosphoglycerate kinase.